The primary structure comprises 299 residues: UTP--glucose-1-phosphate uridylyltransferase 1 (299 aa).

The protein belongs to the UDPGP type 2 family.

It catalyses the reaction alpha-D-glucose 1-phosphate + UTP + H(+) = UDP-alpha-D-glucose + diphosphate. It functions in the pathway carbohydrate metabolism; nucleotide-sugar metabolism. The chain is UTP--glucose-1-phosphate uridylyltransferase 1 (hasC1) from Streptococcus pyogenes serotype M6 (strain ATCC BAA-946 / MGAS10394).